Here is a 334-residue protein sequence, read N- to C-terminus: Ketol-acid reductoisomerase (NADP(+)) (334 aa).

The KARI N-terminal Rossmann domain maps to 1-181 (MTTVYYDQDV…GATRAGVIET (181 aa)). Residues 25–28 (YGSQ), Arg48, Ser52, and 82–85 (DEIQ) contribute to the NADP(+) site. Residue His107 is part of the active site. Gly133 contributes to the NADP(+) binding site. The KARI C-terminal knotted domain maps to 182–327 (TFKEETETDL…RELREMMPFI (146 aa)). Mg(2+) contacts are provided by Asp190, Glu194, Glu226, and Glu230. Residue Ser251 participates in substrate binding.

This sequence belongs to the ketol-acid reductoisomerase family. It depends on Mg(2+) as a cofactor.

It catalyses the reaction (2R)-2,3-dihydroxy-3-methylbutanoate + NADP(+) = (2S)-2-acetolactate + NADPH + H(+). The catalysed reaction is (2R,3R)-2,3-dihydroxy-3-methylpentanoate + NADP(+) = (S)-2-ethyl-2-hydroxy-3-oxobutanoate + NADPH + H(+). Its pathway is amino-acid biosynthesis; L-isoleucine biosynthesis; L-isoleucine from 2-oxobutanoate: step 2/4. It functions in the pathway amino-acid biosynthesis; L-valine biosynthesis; L-valine from pyruvate: step 2/4. In terms of biological role, involved in the biosynthesis of branched-chain amino acids (BCAA). Catalyzes an alkyl-migration followed by a ketol-acid reduction of (S)-2-acetolactate (S2AL) to yield (R)-2,3-dihydroxy-isovalerate. In the isomerase reaction, S2AL is rearranged via a Mg-dependent methyl migration to produce 3-hydroxy-3-methyl-2-ketobutyrate (HMKB). In the reductase reaction, this 2-ketoacid undergoes a metal-dependent reduction by NADPH to yield (R)-2,3-dihydroxy-isovalerate. This Staphylococcus aureus (strain USA300) protein is Ketol-acid reductoisomerase (NADP(+)).